A 188-amino-acid polypeptide reads, in one-letter code: Probable manganese efflux pump MntP (188 aa).

The next 6 helical transmembrane spans lie at 3–23 (FTAT…ASIG), 41–61 (LIFG…GILA), 66–86 (LEWN…RMII), 106–128 (WLLV…GLAF), 143–163 (ATLI…PMLG), and 168–188 (ILGG…HFHG).

This sequence belongs to the MntP (TC 9.B.29) family.

It localises to the cell inner membrane. In terms of biological role, probably functions as a manganese efflux pump. In Salmonella typhimurium (strain LT2 / SGSC1412 / ATCC 700720), this protein is Probable manganese efflux pump MntP.